A 676-amino-acid chain; its full sequence is E3 ubiquitin-protein ligase ICP0 (676 aa).

The segment at 13–52 adopts an RING-type zinc-finger fold; that stretch reads CCICLDAITGAARALPCLHAFCLACIRRWLEGRPTCPLCK. Disordered stretches follow at residues 101–135, 266–486, and 555–676; these read DLTA…EAAG, HLIP…PAPI, and AAIS…AWRQ. Positions 110 to 135 are enriched in gly residues; sequence PGAGGEAGAAGGSEAGGGAGGAEAAG. Over residues 286–303 the composition is skewed to acidic residues; it reads SDSDSEGSEDDSWSESEE. Over residues 304–314 the composition is skewed to low complexity; that stretch reads SSSGLSTSDLT. Acidic residues predominate over residues 315 to 328; it reads AIDDTETEPETDAE. Over residues 351-361 the composition is skewed to polar residues; that stretch reads YVSTRGRQTPA. Composition is skewed to low complexity over residues 375-388 and 397-411; these read GRAA…SSRS and LPAA…QARA. Positions 422–439 are enriched in gly residues; the sequence is GAGLGVAAGETAGWGVGS. The segment covering 440-450 has biased composition (basic and acidic residues); that stretch reads EEGRGERRAKL. Residues 474-484 are compositionally biased toward pro residues; that stretch reads TPAPAPAPAPA. Residues 555–597 are compositionally biased toward low complexity; that stretch reads AAISTRAPTPSPAGRAPAADPRRAGAPALAGAARAEAGRNGNP.

Post-translationally, auto-ubiquitinated. In terms of processing, the strongly acidic region might serve as a transcriptional activation domain, possibly regulated through phosphorylation by casein kinase II.

The catalysed reaction is S-ubiquitinyl-[E2 ubiquitin-conjugating enzyme]-L-cysteine + [acceptor protein]-L-lysine = [E2 ubiquitin-conjugating enzyme]-L-cysteine + N(6)-ubiquitinyl-[acceptor protein]-L-lysine.. Its function is as follows. Evades nuclear antiviral defenses triggered by dsDNA viruses. Acts during the initial stages of lytic infection and the reactivation of latent viral genome. Prevents the antiviral effect of nuclear bodies by degrading host PML and SP100. This is E3 ubiquitin-protein ligase ICP0 (BICP0) from Bos taurus (Bovine).